A 346-amino-acid chain; its full sequence is Probable 3-hydroxyacyl-CoA dehydrogenase (346 aa).

The tract at residues 322 to 346 (RANLSPSATPCTPWKARKATSCAPP) is disordered.

It belongs to the 3-hydroxyacyl-CoA dehydrogenase family.

It catalyses the reaction a (3S)-3-hydroxyacyl-CoA + NAD(+) = a 3-oxoacyl-CoA + NADH + H(+). This chain is Probable 3-hydroxyacyl-CoA dehydrogenase, found in Deinococcus radiodurans (strain ATCC 13939 / DSM 20539 / JCM 16871 / CCUG 27074 / LMG 4051 / NBRC 15346 / NCIMB 9279 / VKM B-1422 / R1).